We begin with the raw amino-acid sequence, 253 residues long: DNA repair protein RecO (253 aa).

Belongs to the RecO family.

Functionally, involved in DNA repair and RecF pathway recombination. This is DNA repair protein RecO from Nitrobacter hamburgensis (strain DSM 10229 / NCIMB 13809 / X14).